A 228-amino-acid polypeptide reads, in one-letter code: Small ribosomal subunit protein uS2c (228 aa).

Belongs to the universal ribosomal protein uS2 family.

It localises to the plastid. The protein resides in the chloroplast. The sequence is that of Small ribosomal subunit protein uS2c (rps2) from Mesostigma viride (Green alga).